Consider the following 463-residue polypeptide: MVKDMETIVSLAKHRGFVFPGSDIYGGLSNTWDYGPLGVELKNNVKKAWWQKFITQSPFNVGIDAAILMNPKTWEASGHLGNFNDPMIDNKDSKIRYRADKLIEDYMQKEKGDENFIADGLSFDEMKRIIDDEGIVCPVSGTANWTDIRQFNLMFKTFQGVTEDSTNEIFLRPETAQGIFVNYKNVQRSMRKKLPFGIGQIGKSFRNEITPGNFIFRTREFEQMELEFFCKPGEEIEWQNYWKTFASQWLKDLNINEENMRLRDHDEEELSHYSNATTDIEYRFPFGWGELWGIASRTDFDLKKHSEHSGEDFKYHDPETNEKYVPYCIEPSLGADRVTLAFLCDAYEEEGVEGSKDARTVMHFHPALAPYKAAVLPLSKKLSEEAIKIFEQLSSKFAIDFDESQSIGKRYRRQDEIGTPYCITFDFDSLEDNQVTVRDRDSMEQVRMPISELETFLAEKVAF.

Substrate contacts are provided by arginine 98 and glutamate 174. Residues 206–208, 216–221, 290–291, and 334–337 contribute to the ATP site; these read RNE, FRTREF, EL, and GADR. 221 to 225 provides a ligand contact to substrate; sequence FEQME. A substrate-binding site is contributed by 330 to 334; that stretch reads EPSLG.

This sequence belongs to the class-II aminoacyl-tRNA synthetase family. In terms of assembly, homodimer.

It is found in the cytoplasm. It catalyses the reaction tRNA(Gly) + glycine + ATP = glycyl-tRNA(Gly) + AMP + diphosphate. Functionally, catalyzes the attachment of glycine to tRNA(Gly). The polypeptide is Glycine--tRNA ligase (Staphylococcus haemolyticus (strain JCSC1435)).